Here is a 272-residue protein sequence, read N- to C-terminus: 2-C-methyl-D-erythritol 4-phosphate cytidylyltransferase (272 aa).

This sequence belongs to the IspD/TarI cytidylyltransferase family. IspD subfamily.

It catalyses the reaction 2-C-methyl-D-erythritol 4-phosphate + CTP + H(+) = 4-CDP-2-C-methyl-D-erythritol + diphosphate. Its pathway is isoprenoid biosynthesis; isopentenyl diphosphate biosynthesis via DXP pathway; isopentenyl diphosphate from 1-deoxy-D-xylulose 5-phosphate: step 2/6. In terms of biological role, catalyzes the formation of 4-diphosphocytidyl-2-C-methyl-D-erythritol from CTP and 2-C-methyl-D-erythritol 4-phosphate (MEP). This Xanthomonas oryzae pv. oryzae (strain MAFF 311018) protein is 2-C-methyl-D-erythritol 4-phosphate cytidylyltransferase.